The following is a 401-amino-acid chain: Histone acetyltransferase type B subunit 2 (401 aa).

WD repeat units lie at residues 116-147 (EHEE…FLYS), 158-189 (FHKD…ALWE), 206-237 (LHSD…KIND), 249-280 (KCPQ…YLYD), and 293-324 (GHED…MMWD). The segment at 335 to 339 (DDAED) is interaction with the histone H4 N-terminus. The WD 6 repeat unit spans residues 350 to 381 (GHRSSVNDFDLNPQIPWLVASAEEENILQVWK).

Belongs to the WD repeat RBAP46/RBAP48/MSI1 family. Component of the HAT-B complex composed of at least HAT1 and HAT2. In the cytoplasm, this complex binds to the histone H4 tail. In the nucleus, the HAT-B complex has an additional component, the histone H3/H4 chaperone HIF1.

Its subcellular location is the cytoplasm. It is found in the nucleus. Functionally, regulatory subunit of the histone acetylase B (HAT-B) complex. The complex acetylates 'Lys-12' of histone H4 which is required for telomeric silencing. HAT2 is required for high affinity binding of the acetyltransferase to histone H4, for the nuclear location of HAT1 and for the HAT1-HIF1 interaction. Alone, it is unable to bind to H4, requiring HAT1 for high affinity interaction with the histone tail. HAT2 also has a HAT1 independent function in life-span regulation. The chain is Histone acetyltransferase type B subunit 2 (HAT2) from Saccharomyces cerevisiae (strain ATCC 204508 / S288c) (Baker's yeast).